The sequence spans 296 residues: Acetyl-coenzyme A carboxylase carboxyl transferase subunit beta (296 aa).

The CoA carboxyltransferase N-terminal domain maps to 26–295 (VWTKCTNCEQ…PFKVGELIIE (270 aa)). Zn(2+) is bound by residues C30, C33, C49, and C52. The segment at 30-52 (CTNCEQVLYSEELKRNMQVCPKC) adopts a C4-type zinc-finger fold.

It belongs to the AccD/PCCB family. In terms of assembly, acetyl-CoA carboxylase is a heterohexamer composed of biotin carboxyl carrier protein (AccB), biotin carboxylase (AccC) and two subunits each of ACCase subunit alpha (AccA) and ACCase subunit beta (AccD). Zn(2+) serves as cofactor.

It localises to the cytoplasm. The enzyme catalyses N(6)-carboxybiotinyl-L-lysyl-[protein] + acetyl-CoA = N(6)-biotinyl-L-lysyl-[protein] + malonyl-CoA. It functions in the pathway lipid metabolism; malonyl-CoA biosynthesis; malonyl-CoA from acetyl-CoA: step 1/1. In terms of biological role, component of the acetyl coenzyme A carboxylase (ACC) complex. Biotin carboxylase (BC) catalyzes the carboxylation of biotin on its carrier protein (BCCP) and then the CO(2) group is transferred by the transcarboxylase to acetyl-CoA to form malonyl-CoA. The polypeptide is Acetyl-coenzyme A carboxylase carboxyl transferase subunit beta (Haemophilus ducreyi (strain 35000HP / ATCC 700724)).